The sequence spans 541 residues: Beta-hexosaminidase subunit A2 (541 aa).

The N-terminal stretch at 1–21 is a signal peptide; the sequence is MINKFLTIFLIFSIVIIKVLS. The active-site Proton donor is the E314. N-linked (GlcNAc...) asparagine glycans are attached at residues N322, N336, N356, N435, and N483.

Belongs to the glycosyl hydrolase 20 family.

The protein resides in the lysosome. It catalyses the reaction Hydrolysis of terminal non-reducing N-acetyl-D-hexosamine residues in N-acetyl-beta-D-hexosaminides.. Functionally, responsible for the degradation of GM2 gangliosides, and a variety of other molecules containing terminal N-acetyl hexosamines. The sequence is that of Beta-hexosaminidase subunit A2 (hexa2) from Dictyostelium discoideum (Social amoeba).